Consider the following 451-residue polypeptide: 3-phosphoshikimate 1-carboxyvinyltransferase (451 aa).

3-phosphoshikimate-binding residues include Lys28, Ser29, and Arg33. Residue Lys28 participates in phosphoenolpyruvate binding. Gly105 and Arg133 together coordinate phosphoenolpyruvate. 4 residues coordinate 3-phosphoshikimate: Ser178, Gln180, Asp331, and Lys358. Position 180 (Gln180) interacts with phosphoenolpyruvate. The active-site Proton acceptor is Asp331. 2 residues coordinate phosphoenolpyruvate: Arg362 and Arg406.

It belongs to the EPSP synthase family. Monomer.

It localises to the cytoplasm. The catalysed reaction is 3-phosphoshikimate + phosphoenolpyruvate = 5-O-(1-carboxyvinyl)-3-phosphoshikimate + phosphate. The protein operates within metabolic intermediate biosynthesis; chorismate biosynthesis; chorismate from D-erythrose 4-phosphate and phosphoenolpyruvate: step 6/7. Its function is as follows. Catalyzes the transfer of the enolpyruvyl moiety of phosphoenolpyruvate (PEP) to the 5-hydroxyl of shikimate-3-phosphate (S3P) to produce enolpyruvyl shikimate-3-phosphate and inorganic phosphate. The protein is 3-phosphoshikimate 1-carboxyvinyltransferase of Rhodospirillum rubrum (strain ATCC 11170 / ATH 1.1.1 / DSM 467 / LMG 4362 / NCIMB 8255 / S1).